We begin with the raw amino-acid sequence, 182 residues long: Probable peptidyl-prolyl cis-trans isomerase A (182 aa).

The region spanning 13–181 is the PPIase cyclophilin-type domain; that stretch reads ATATATLHTN…DPVVIESITI (169 aa).

This sequence belongs to the cyclophilin-type PPIase family.

It is found in the cytoplasm. The catalysed reaction is [protein]-peptidylproline (omega=180) = [protein]-peptidylproline (omega=0). In terms of biological role, PPIases accelerate the folding of proteins. It catalyzes the cis-trans isomerization of proline imidic peptide bonds in oligopeptides. This chain is Probable peptidyl-prolyl cis-trans isomerase A (ppiA), found in Mycobacterium bovis (strain ATCC BAA-935 / AF2122/97).